The primary structure comprises 503 residues: UDP-N-acetylglucosamine--peptide N-acetylglucosaminyltransferase GtfA subunit (503 aa).

Residues 1–78 (MTIYNINLGI…FTDIKIAPTS (78 aa)) are N-terminus R-fold-1. 16 to 19 (GVEY) contacts UDP. Residues 79-195 (VTVDDVLAYF…VYHFKDKIFY (117 aa)) are extended beta-sheet domain. A C-terminus R-fold-1 region spans residues 196-306 (GKQAFVRAFM…QPKIVTIPVG (111 aa)). N-acetyl-D-glucosamine is bound at residue histidine 242. Residues 307–503 (SIDSLTDSSQ…KKTVEEVLHD (197 aa)) are R-fold-2. Residue arginine 328 coordinates UDP. Residue glutamate 332 coordinates N-acetyl-D-glucosamine. UDP-binding positions include lysine 333, glycine 358, and 384–385 (HA). 404 to 407 (EGFG) provides a ligand contact to N-acetyl-D-glucosamine. 408-412 (LTLME) contacts UDP.

It belongs to the glycosyltransferase group 1 family. Glycosyltransferase 4 subfamily. Monomer. Interacts with stabilizing protein GtfB, probably as a heterotetramer with 2 subunits each of GtfA and GtfB, part of the accessory SecA2/SecY2 protein translocation apparatus.

Its subcellular location is the cytoplasm. The protein localises to the cell membrane. The enzyme catalyses L-seryl-[protein] + UDP-N-acetyl-alpha-D-glucosamine = 3-O-[N-acetyl-alpha-D-glucosaminyl]-L-seryl-[protein] + UDP + H(+). Its pathway is protein modification; protein glycosylation. In terms of biological role, required for the polymorphic O-glycosylation of serine-rich repeat protein PsrP. Catalyzes the first step in glycosylation by transferring N-acetylglucosamine from UDP-GlcNAc to serine residues in PsrP. Part of the accessory SecA2/SecY2 system specifically required to export serine-rich repeat cell wall proteins encoded upstream in the same operon. The GtfA-GtfB complex adds GlcNAc from UDP-GlcNAc to PsrP (experimentally characterized with truncated PsrP-SSR1 constructs); this subunit alone has weak N-acetylglucosaminyl transferase activity that is 10-fold stimulated by GtfB. The complex requires at least a 25 residue-long peptide for activity; the in vitro assay has only been seen to glycosylate Ser residues. The alpha linkage was shown in L.reuteri. In Streptococcus pneumoniae serotype 4 (strain ATCC BAA-334 / TIGR4), this protein is UDP-N-acetylglucosamine--peptide N-acetylglucosaminyltransferase GtfA subunit.